Reading from the N-terminus, the 687-residue chain is Putative mitochondrial carnitine O-acetyltransferase (687 aa).

The active-site Proton acceptor is histidine 346. 446 to 459 (GASHIKTVFKCSPD) lines the CoA pocket. (R)-carnitine contacts are provided by tyrosine 481 and threonine 494. Serine 517 is subject to Phosphoserine.

The protein belongs to the carnitine/choline acetyltransferase family.

Its subcellular location is the mitochondrion inner membrane. It catalyses the reaction (R)-carnitine + acetyl-CoA = O-acetyl-(R)-carnitine + CoA. In terms of biological role, involved in the transfer of acetyl-CoA into mitochondria. May also be involved in the metabolism of acetate and of ethanol. The protein is Putative mitochondrial carnitine O-acetyltransferase (YAT1) of Saccharomyces cerevisiae (strain ATCC 204508 / S288c) (Baker's yeast).